The sequence spans 304 residues: DCN1-like protein 3 (304 aa).

2 disordered regions span residues 1–86 (MGQC…AEES) and 284–304 (EGEG…EEQT). A lipid anchor (N-myristoyl glycine) is attached at G2. In terms of domain architecture, DCUN1 spans 86-278 (SSLQRLEELF…LFDTFVEWEM (193 aa)).

Part of a complex containing DCUN1D3, CUL3 and RBX1. Interacts (via the DCUN1 domain) with the unneddylated cullins: interacts with CUL1, CUL2, CUL3, CUL4A, CUL4B and CUL5; these interactions promote the cullin neddylation and the identity of the cullin dictates the affinity of the interaction. Interacts preferentially with CUL3; this interaction triggers the relocalization of CUL3 to the cell membrane where CUL3 is neddylated. Interacts (via DCUN1 domain) with RBX1. May also interact with regulators or subunits of cullin-RING ligases such as RNF7, ELOB and DDB1; these interactions are bridged by cullins. Interacts (via DCUN1 domain) with CAND1; this interaction is bridged by cullins and strongly inhibits cullin neddylation. These CAND-cullin-DCNL complexes can only be neddylated in the presence of a substrate adapter. Interacts (via DCUN1 domain) with the N-terminally acetylated form of UBE2M and UBE2F.

The protein localises to the cell membrane. The protein resides in the cytoplasm. It is found in the nucleus. Its subcellular location is the perinuclear region. Functionally, contributes to the neddylation of all cullins by transferring NEDD8 from N-terminally acetylated NEDD8-conjugating E2s enzyme to different cullin C-terminal domain-RBX complexes and may play a role in the cell cycle progression by regulating the SCF ubiquitin E3 ligase complex, after UV damage. At the cell membrane, can promote and as well inhibit cullins neddylation. The chain is DCN1-like protein 3 from Pongo abelii (Sumatran orangutan).